The chain runs to 202 residues: dTTP/UTP pyrophosphatase (202 aa).

The Proton acceptor role is filled by Asp-74.

It belongs to the Maf family. YhdE subfamily. The cofactor is a divalent metal cation.

It localises to the cytoplasm. The enzyme catalyses dTTP + H2O = dTMP + diphosphate + H(+). It catalyses the reaction UTP + H2O = UMP + diphosphate + H(+). In terms of biological role, nucleoside triphosphate pyrophosphatase that hydrolyzes dTTP and UTP. May have a dual role in cell division arrest and in preventing the incorporation of modified nucleotides into cellular nucleic acids. The chain is dTTP/UTP pyrophosphatase from Methylococcus capsulatus (strain ATCC 33009 / NCIMB 11132 / Bath).